Reading from the N-terminus, the 122-residue chain is MKLLTGLVFCSLVLGVSSRSFFSFLGEAFDGARDMWRAYSDMREANYIGSDKYFHARGNYDAAKRGPGGAWAAEVITDARENIQRFFGHGAEDSLADQAANEWGRSGKDPNHFRPAGLPEKY.

Residues 1 to 18 (MKLLTGLVFCSLVLGVSS) form the signal peptide. Positions 19–45 (RSFFSFLGEAFDGARDMWRAYSDMREA) are important for amyloid formation; forms amyloid fibrils in vitro. Positions 95–122 (LADQAANEWGRSGKDPNHFRPAGLPEKY) are cleaved as a propeptide — often cleaved during amyloidogenesis. The disordered stretch occupies residues 98–122 (QAANEWGRSGKDPNHFRPAGLPEKY). Asn-101 carries the post-translational modification N4,N4-dimethylasparagine.

It belongs to the SAA family. In terms of assembly, homohexamer; dimer of trimers. Can form amyloid fibrils after partial proteolysis; the native, undenatured protein does not form amyloid fibrils (in vitro). Apolipoprotein of the HDL complex. Binds to heparin. In terms of processing, this protein is the precursor of amyloid protein A, which is formed by the removal of approximately 24 residues from the C-terminal end. Expressed by the liver; secreted in plasma (at protein level).

It localises to the secreted. Its function is as follows. Major acute phase protein. In Homo sapiens (Human), this protein is Serum amyloid A-1 protein (SAA1).